Here is a 135-residue protein sequence, read N- to C-terminus: Phosphoinositide-interacting protein (135 aa).

Positions 1–21 (MEVLPKALEVDERSPESKDLL) are disordered. Over residues 8-19 (LEVDERSPESKD) the composition is skewed to basic and acidic residues. 2 helical membrane passes run 54 to 74 (IIIMSVGAAILLFGVAITCVA) and 92 to 112 (PAFLSLGLMMLVCGLVWVPII).

In terms of assembly, interacts with TRPV1. Strongly expressed in most dorsal root ganglia (DRG) and trigeminal neurons. Expressed by most peptidergic (CGRP+) and non-peptidergic (IB4+) DRG neurons. Weakly expressed in other parts of the peripheral nervous system (PNS) including sympathetic and enteric neurons. Not expressed in the spinal cord.

It localises to the membrane. Its function is as follows. Regulatory subunit of TRPV1, a molecular sensor of noxious heat and capsaicin. Positively regulates TRPV1 channel activity via phosphatidylinositol 4,5-bisphosphate (PIP2). Binds various phosphoinositide, including phosphatidylinositol 4,5-bisphosphate (PIP2), but not phosphatidylinositol (PI). The chain is Phosphoinositide-interacting protein (Pirt) from Mus musculus (Mouse).